Reading from the N-terminus, the 81-residue chain is uncharacterized protein (81 aa).

This is an uncharacterized protein from Synechocystis sp. (strain ATCC 27184 / PCC 6803 / Kazusa).